Reading from the N-terminus, the 273-residue chain is DnaJ homolog subfamily C member 27 (273 aa).

GTP contacts are provided by residues 23–30 (GNAEVGKS), 71–75 (DMAGH), and 134–137 (NKID). The J domain occupies 217-273 (DSWDMLGVKPGATRDEVNKAYRKLAVLLHPDKCVAPGSEDAFKAVVNARTALLKNIK).

This sequence belongs to the small GTPase superfamily. Rab family.

The protein resides in the nucleus. GTPase possibly involved in regulation of the MEK/ERK pathway. The polypeptide is DnaJ homolog subfamily C member 27 (DNAJC27) (Gallus gallus (Chicken)).